Here is a 414-residue protein sequence, read N- to C-terminus: Serine hydroxymethyltransferase (414 aa).

(6S)-5,6,7,8-tetrahydrofolate-binding positions include Leu-118 and 122-124; that span reads GHL. Lys-227 carries the post-translational modification N6-(pyridoxal phosphate)lysine. (6S)-5,6,7,8-tetrahydrofolate is bound by residues Glu-240 and 350-352; that span reads SPF.

Belongs to the SHMT family. Homodimer. Requires pyridoxal 5'-phosphate as cofactor.

It is found in the cytoplasm. It catalyses the reaction (6R)-5,10-methylene-5,6,7,8-tetrahydrofolate + glycine + H2O = (6S)-5,6,7,8-tetrahydrofolate + L-serine. It functions in the pathway one-carbon metabolism; tetrahydrofolate interconversion. Its pathway is amino-acid biosynthesis; glycine biosynthesis; glycine from L-serine: step 1/1. In terms of biological role, catalyzes the reversible interconversion of serine and glycine with tetrahydrofolate (THF) serving as the one-carbon carrier. This reaction serves as the major source of one-carbon groups required for the biosynthesis of purines, thymidylate, methionine, and other important biomolecules. Also exhibits THF-independent aldolase activity toward beta-hydroxyamino acids, producing glycine and aldehydes, via a retro-aldol mechanism. The chain is Serine hydroxymethyltransferase from Bacillus cereus (strain ZK / E33L).